A 265-amino-acid chain; its full sequence is U6 snRNA phosphodiesterase 1 (265 aa).

Residues 1 to 22 are disordered; it reads MSLVCYESSSSGEDDDETISDN. Residue H109 is the Proton acceptor of the active site. Residues 109–111 and 195–201 each bind AMP; these read HLS and DFLLHIS. 197–201 lines the UMP pocket; it reads LLHIS. H199 (proton donor) is an active-site residue.

It belongs to the 2H phosphoesterase superfamily. USB1 family.

The protein resides in the nucleus. The catalysed reaction is a 3'-end uridylyl-uridine-RNA = a 3'-end 2',3'-cyclophospho-uridine-RNA + uridine. Its function is as follows. 3'-5' RNA exonuclease that trims the 3' end of oligo(U) tracts of the pre-U6 small nuclear RNA (snRNA) molecule, leading to the formation of a U6 snRNA 3' end-terminated with a 2',3'-cyclic phosphate.d. Participates in the U6 snRNA 3' end processing that prevents U6 snRNA degradation. This chain is U6 snRNA phosphodiesterase 1, found in Schizosaccharomyces pombe (strain 972 / ATCC 24843) (Fission yeast).